Consider the following 872-residue polypeptide: Serine/threonine-protein phosphatase 1 regulatory subunit 10 (872 aa).

The tract at residues methionine 1 to aspartate 348 is interaction with TOX4. Positions lysine 73–glutamine 147 constitute a TFIIS N-terminal domain. Disordered stretches follow at residues glutamine 147–leucine 213, serine 247–proline 270, lysine 307–threonine 398, and valine 534–aspartate 837. 2 stretches are compositionally biased toward basic and acidic residues: residues alanine 153–serine 166 and proline 174–lysine 196. Lysine 179 participates in a covalent cross-link: Glycyl lysine isopeptide (Lys-Gly) (interchain with G-Cter in SUMO2). Low complexity predominate over residues alanine 248 to proline 258. Lysine 262 is covalently cross-linked (Glycyl lysine isopeptide (Lys-Gly) (interchain with G-Cter in SUMO2)). Serine 313 carries the phosphoserine modification. Over residues lysine 325–serine 336 the composition is skewed to low complexity. A necessary for interaction with PPP1CA region spans residues proline 357–alanine 433. A Phosphoserine modification is found at serine 382. A necessary for interaction with PPP1CC region spans residues glycine 393–arginine 408. A PP1-binding motif motif is present at residues arginine 394–valine 423. The residue at position 398 (threonine 398) is a Phosphothreonine; by PKA. The interaction with WDR82 stretch occupies residues threonine 418–leucine 619. A compositionally biased stretch (gly residues) spans glycine 540–glycine 551. A phosphoserine mark is found at serine 545 and serine 591. The span at glutamate 583–histidine 595 shows a compositional bias: polar residues. The span at proline 596–lysine 611 shows a compositional bias: basic and acidic residues. The span at proline 644–histidine 655 shows a compositional bias: pro residues. Arginine 665 carries the post-translational modification Omega-N-methylarginine. Over residues arginine 674 to glycine 690 the composition is skewed to low complexity. Arginine 693 and arginine 737 each carry omega-N-methylarginine. Gly residues predominate over residues alanine 724–glycine 762. The segment covering proline 795–glycine 835 has biased composition (basic and acidic residues). A C3H1-type zinc finger spans residues methionine 838–valine 866.

In terms of assembly, component of the PNUTS-PP1 complex (also named PTW/PP1 complex), composed of PPP1R10/PNUTS, TOX4, WDR82, and PPP1CA (or PPP1CB or PPP1CC). Post-translationally, phosphorylated on Thr-398 by PKA within the region necessary for interaction with PPP1CA. As to expression, expressed in testis, brain and intestine (at protein level). Highly expressed in testis.

It localises to the nucleus. It is found in the chromosome. Functionally, substrate-recognition component of the PNUTS-PP1 protein phosphatase complex, a protein phosphatase 1 (PP1) complex that promotes RNA polymerase II transcription pause-release, allowing transcription elongation. Promoter-proximal pausing by RNA polymerase II is a transcription halt following transcription initiation but prior to elongation, which acts as a checkpoint to control that transcripts are favorably configured for transcriptional elongation. The PNUTS-PP1 complex mediates the release of RNA polymerase II from promoter-proximal region of genes by catalyzing dephosphorylation of proteins involved in transcription, such as AFF4, CDK9, MEPCE, INTS12, NCBP1, POLR2M/GDOWN1 and SUPT6H. The PNUTS-PP1 complex also regulates RNA polymerase II transcription termination by mediating dephosphorylation of SUPT5H in termination zones downstream of poly(A) sites, thereby promoting deceleration of RNA polymerase II transcription. PNUTS-PP1 complex is also involved in the response to replication stress by mediating dephosphorylation of POLR2A at 'Ser-5' of the CTD, promoting RNA polymerase II degradation. The PNUTS-PP1 complex also plays a role in the control of chromatin structure and cell cycle progression during the transition from mitosis into interphase. PNUTS-PP1 complex mediates dephosphorylation of MYC, promoting MYC stability by preventing MYC ubiquitination by the SCF(FBXW7) complex. In addition to acts as a substrate-recognition component, PPP1R10/PNUTS also acts as a nuclear targeting subunit for the PNUTS-PP1 complex. In some context, PPP1R10/PNUTS also acts as an inhibitor of protein phosphatase 1 (PP1) activity by preventing access to substrates. The protein is Serine/threonine-protein phosphatase 1 regulatory subunit 10 of Rattus norvegicus (Rat).